The sequence spans 503 residues: ATP synthase subunit alpha (503 aa).

Residue 170–177 coordinates ATP; that stretch reads GDRQTGKT.

It belongs to the ATPase alpha/beta chains family. F-type ATPases have 2 components, CF(1) - the catalytic core - and CF(0) - the membrane proton channel. CF(1) has five subunits: alpha(3), beta(3), gamma(1), delta(1), epsilon(1). CF(0) has three main subunits: a(1), b(2) and c(9-12). The alpha and beta chains form an alternating ring which encloses part of the gamma chain. CF(1) is attached to CF(0) by a central stalk formed by the gamma and epsilon chains, while a peripheral stalk is formed by the delta and b chains.

The protein localises to the cell inner membrane. The enzyme catalyses ATP + H2O + 4 H(+)(in) = ADP + phosphate + 5 H(+)(out). Produces ATP from ADP in the presence of a proton gradient across the membrane. The alpha chain is a regulatory subunit. The polypeptide is ATP synthase subunit alpha (Thermotoga neapolitana (strain ATCC 49049 / DSM 4359 / NBRC 107923 / NS-E)).